The following is a 270-amino-acid chain: MSRLEQRFAQLKTEGRAVLVTFITAGDPGYDTSLKVLKGLPAAGADVIELGMPFTDPMADGVAIQLATLRALDAGQTLLKTLQMVSEFRVDDQTTPIVLMGYYNPIHRFGVEAFVAQAKEAGVDGLIIVDLPPEHDAELATPAQASGIDFIRLTTPTTDDARLPRVLERSSGFVYYVSVAGVTGAGSATTEHVTEAIARLRRHTSLPISVGFGIRTPEQAAAIARLADGVVVGSAFVDKIATAESPEQAIDGVLTLCAALAEGVRNARVS.

Catalysis depends on proton acceptor residues glutamate 49 and aspartate 60.

This sequence belongs to the TrpA family. In terms of assembly, tetramer of two alpha and two beta chains.

The enzyme catalyses (1S,2R)-1-C-(indol-3-yl)glycerol 3-phosphate + L-serine = D-glyceraldehyde 3-phosphate + L-tryptophan + H2O. Its pathway is amino-acid biosynthesis; L-tryptophan biosynthesis; L-tryptophan from chorismate: step 5/5. Functionally, the alpha subunit is responsible for the aldol cleavage of indoleglycerol phosphate to indole and glyceraldehyde 3-phosphate. The sequence is that of Tryptophan synthase alpha chain from Pseudomonas syringae pv. tomato (strain ATCC BAA-871 / DC3000).